Here is a 279-residue protein sequence, read N- to C-terminus: tRNA (guanine-N(1)-)-methyltransferase (279 aa).

S-adenosyl-L-methionine contacts are provided by residues glycine 132 and 152 to 157 (IGDYVL).

The protein belongs to the RNA methyltransferase TrmD family. Homodimer.

The protein resides in the cytoplasm. It carries out the reaction guanosine(37) in tRNA + S-adenosyl-L-methionine = N(1)-methylguanosine(37) in tRNA + S-adenosyl-L-homocysteine + H(+). Its function is as follows. Specifically methylates guanosine-37 in various tRNAs. The chain is tRNA (guanine-N(1)-)-methyltransferase from Saccharophagus degradans (strain 2-40 / ATCC 43961 / DSM 17024).